A 1134-amino-acid polypeptide reads, in one-letter code: Phospholipid-transporting ATPase IH (1134 aa).

The Cytoplasmic portion of the chain corresponds to 1-61 (MDCSLVRTLV…SSKYTFWNFI (61 aa)). A helical membrane pass occupies residues 62-82 (PKNLFEQFRRVANFYFLIIFL). The Extracellular segment spans residues 83 to 88 (VQLIID). The helical transmembrane segment at 89-110 (TPTSPVTSGLPLFFVITVTAIK) threads the bilayer. The Cytoplasmic segment spans residues 111-296 (QGYEDWLRHK…SAVEKSMNAF (186 aa)). Residues 297–318 (LIVYLCILISKALINTVLKYMW) form a helical membrane-spanning segment. Over 319-349 (QSEPFRDEPWYNQKTESERQRNLFLKAFTDF) the chain is Extracellular. Residues 350–372 (LAFMVLFNYIIPVSMYVTVEMQK) form a helical membrane-spanning segment. The Cytoplasmic segment spans residues 373-881 (FLGSYFITWD…GHFYYIRISE (509 aa)). Residue Asp-414 is the 4-aspartylphosphate intermediate of the active site. Residues Asp-414, Lys-415, Thr-416, Glu-511, Phe-553, Lys-576, Arg-607, Thr-687, Gly-688, and Asp-689 each coordinate ATP. Asp-414 contributes to the Mg(2+) binding site. Position 416 (Thr-416) interacts with Mg(2+). Ser-738 is modified (phosphoserine). Arg-798 and Lys-804 together coordinate ATP. Asp-825 is a binding site for Mg(2+). ATP is bound by residues Asn-828 and Asp-829. Asp-829 is a binding site for Mg(2+). A helical membrane pass occupies residues 882 to 902 (LVQYFFYKNVCFIFPQFLYQF). Residues 903-914 (FCGFSQQTLYDT) are Extracellular-facing. Residues 915-934 (AYLTLYNISFTSLPILLYSL) traverse the membrane as a helical segment. Residues 935-964 (MEQHVGIDVLKRDPTLYRDVAKNALLRWRV) are Cytoplasmic-facing. A helical transmembrane segment spans residues 965-986 (FIYWTLLGLFDALVFFFGAYFV). Over 987 to 1000 (FENTTVTSNGQIFG) the chain is Extracellular. A helical transmembrane segment spans residues 1001-1023 (NWTFGTLVFTVMVFTVTLKLALD). At 1024–1029 (THYWTW) the chain is on the cytoplasmic side. Residues 1030–1050 (INHFVIWGSLLFYVVFSLLWG) form a helical membrane-spanning segment. The Extracellular portion of the chain corresponds to 1051–1068 (GVIWPFLNYQRMYYVFIQ). Residues 1069–1093 (MLSSGPAWLAIVLLVTISLLPDVLK) form a helical membrane-spanning segment. The Cytoplasmic portion of the chain corresponds to 1094-1134 (KVLCRQLWPTATERVQTKSQCLSVEQSTIFMLSQTSSSLSF).

It belongs to the cation transport ATPase (P-type) (TC 3.A.3) family. Type IV subfamily. In terms of assembly, component of a P4-ATPase flippase complex which consists of a catalytic alpha subunit ATP11A and an accessory beta subunit TMEM30A. It depends on Mg(2+) as a cofactor. Post-translationally, proteolytically cleaved by CASP3. Widely expressed. Expressed in myoblasts.

Its subcellular location is the cell membrane. It is found in the early endosome. The protein resides in the recycling endosome. The protein localises to the endoplasmic reticulum membrane. The catalysed reaction is ATP + H2O + phospholipidSide 1 = ADP + phosphate + phospholipidSide 2.. It catalyses the reaction a 1,2-diacyl-sn-glycero-3-phospho-L-serine(out) + ATP + H2O = a 1,2-diacyl-sn-glycero-3-phospho-L-serine(in) + ADP + phosphate + H(+). It carries out the reaction a 1,2-diacyl-sn-glycero-3-phosphoethanolamine(out) + ATP + H2O = a 1,2-diacyl-sn-glycero-3-phosphoethanolamine(in) + ADP + phosphate + H(+). The flippase activity is inactivated by caspase-mediated cleavage in apoptotic cells, allowing for PS exposure on the cell surface and engulfment of apoptotic cells by macrophages. The ATPase activity is up-regulated by aminophospholipids PS and PE and down-regulated by increasing intracellular Ca2+ levels. Its function is as follows. Catalytic component of a P4-ATPase flippase complex which catalyzes the hydrolysis of ATP coupled to the transport of aminophospholipids, phosphatidylserines (PS) and phosphatidylethanolamines (PE), from the outer to the inner leaflet of the plasma membrane. Does not show flippase activity toward phosphatidylcholine (PC). Contributes to the maintenance of membrane lipid asymmetry with a specific role in morphogenesis of muscle cells. In myoblasts, mediates PS enrichment at the inner leaflet of plasma membrane, triggering PIEZO1-dependent Ca2+ influx and Rho GTPases signal transduction, subsequently leading to the assembly of cortical actomyosin fibers and myotube formation. May be involved in the uptake of farnesyltransferase inhibitor drugs, such as lonafarnib. The chain is Phospholipid-transporting ATPase IH (ATP11A) from Homo sapiens (Human).